Reading from the N-terminus, the 280-residue chain is F420-dependent methylenetetrahydromethanopterin dehydrogenase (280 aa).

Belongs to the MTD family.

The enzyme catalyses 5,10-methylenetetrahydromethanopterin + oxidized coenzyme F420-(gamma-L-Glu)(n) + 2 H(+) = 5,10-methenyl-5,6,7,8-tetrahydromethanopterin + reduced coenzyme F420-(gamma-L-Glu)(n). It functions in the pathway one-carbon metabolism; methanogenesis from CO(2); 5,10-methylene-5,6,7,8-tetrahydromethanopterin from 5,10-methenyl-5,6,7,8-tetrahydromethanopterin (coenzyme F420 route): step 1/1. Its function is as follows. Catalyzes the reversible reduction of methenyl-H(4)MPT(+) to methylene-H(4)MPT. The chain is F420-dependent methylenetetrahydromethanopterin dehydrogenase from Methanoculleus marisnigri (strain ATCC 35101 / DSM 1498 / JR1).